The primary structure comprises 551 residues: Medium/long-chain-fatty-acid--CoA/3-oxocholest-4-en-26-oate--CoA ligase (551 aa).

Residues 172–180, D417, R432, and K523 contribute to the ATP site; that span reads TGGTTGFPK.

This sequence belongs to the ATP-dependent AMP-binding enzyme family.

It catalyses the reaction a medium-chain fatty acid + ATP + CoA = a medium-chain fatty acyl-CoA + AMP + diphosphate. It carries out the reaction a long-chain fatty acid + ATP + CoA = a long-chain fatty acyl-CoA + AMP + diphosphate. The enzyme catalyses (25S)-3-oxocholest-4-en-26-oate + ATP + CoA = (25S)-3-oxocholest-4-en-26-oyl-CoA + AMP + diphosphate. The protein operates within lipid metabolism; fatty acid biosynthesis. It functions in the pathway steroid metabolism; cholesterol metabolism. In terms of biological role, plays an essential role in degradation of the side chains of C-24 branched-chain sterols. Not essential for degradation of straight chain sterols such as cholesterol. Catalyzes the activation of medium/long-chain fatty acids as acyl-coenzyme A (acyl-CoA), which are then transferred to the multifunctional polyketide synthase (PKS) type III for further chain extension. May be involved in the degradation of cholesterol via the degradation of the side chains of C-24 branched-chain sterols. This Mycolicibacterium smegmatis (strain ATCC 700084 / mc(2)155) (Mycobacterium smegmatis) protein is Medium/long-chain-fatty-acid--CoA/3-oxocholest-4-en-26-oate--CoA ligase.